An 87-amino-acid polypeptide reads, in one-letter code: Small ribosomal subunit protein uS15c (87 aa).

This sequence belongs to the universal ribosomal protein uS15 family. In terms of assembly, part of the 30S ribosomal subunit.

It localises to the plastid. The protein resides in the chloroplast. This is Small ribosomal subunit protein uS15c (rps15) from Solanum tuberosum (Potato).